Reading from the N-terminus, the 435-residue chain is Plant UBX domain-containing protein 6 (435 aa).

3 disordered regions span residues 1 to 150 (MDVN…PQKV), 208 to 265 (ENYT…EDQP), and 311 to 352 (PTTT…SMSS). A compositionally biased stretch (low complexity) spans 49-62 (TSSFSTFDGSSGYS). The span at 112–129 (AVEHYGGEENRAIERPEQ) shows a compositional bias: basic and acidic residues. A compositionally biased stretch (low complexity) spans 130–141 (SSRSMSEETVSS). Positions 150-211 (VFTHTVTSWS…IISREEENYT (62 aa)) constitute an SEP 1 domain. Residues 211–222 (TESQAGSDSAST) show a composition bias toward polar residues. The span at 231 to 242 (RAKESAIERSEQ) shows a compositional bias: basic and acidic residues. The span at 252–265 (DSAELQEQQQEDQP) shows a compositional bias: acidic residues. The SEP 2 domain maps to 268-343 (VVTYTVTIWR…ESTSTEPPLT (76 aa)). Composition is skewed to low complexity over residues 312–323 (TTTRSTSCSSQT) and 333–349 (SEST…QPPS). The 78-residue stretch at 357 to 434 (PAAPTTSIQL…GIANSVLVQK (78 aa)) folds into the UBX domain.

The polypeptide is Plant UBX domain-containing protein 6 (Arabidopsis thaliana (Mouse-ear cress)).